A 475-amino-acid chain; its full sequence is 3-hydroxyadipyl-CoA dehydrogenase (475 aa).

The protein belongs to the 3-hydroxyacyl-CoA dehydrogenase family. Homotrimer.

It carries out the reaction (3S)-3-hydroxyadipyl-CoA + NAD(+) = 3-oxoadipyl-CoA + NADH + H(+). The protein operates within aromatic compound metabolism; phenylacetate degradation. Its function is as follows. Catalyzes the oxidation of 3-hydroxyadipyl-CoA to yield 3-oxoadipyl-CoA. The sequence is that of 3-hydroxyadipyl-CoA dehydrogenase (paaH) from Escherichia coli (strain K12).